The following is a 451-amino-acid chain: Heme sensor protein HssS (451 aa).

The next 2 membrane-spanning stretches (helical) occupy residues 9–29 (IAIYAITVILFSALMSFLFTN) and 164–184 (IFLAVLITLLLIISISLVIAS). An HAMP domain is found at 186–238 (YSIIKPVTALKNATTRIMKGDFSTPIKQTRHDEIGTLQSRFNTMRQNLGQVDQ). The Histidine kinase domain occupies 246–451 (NVSHEIKTPL…KTQFIVKLFI (206 aa)). Phosphohistidine; by autocatalysis is present on histidine 249.

Autophosphorylated.

The protein localises to the cell membrane. It carries out the reaction ATP + protein L-histidine = ADP + protein N-phospho-L-histidine.. Member of the two-component regulatory system HssS/HssR involved in intracellular heme homeostasis and tempering of staphylococcal virulence. HssS functions as a heme sensor histidine kinase which is autophosphorylated at a histidine residue and transfers its phosphate group to an aspartate residue of HssR. HssR/HssS activates the expression of HrtAB, an efflux pump, in response to extracellular heme, hemin, hemoglobin or blood. The protein is Heme sensor protein HssS (hssS) of Staphylococcus epidermidis (strain ATCC 12228 / FDA PCI 1200).